Reading from the N-terminus, the 312-residue chain is DNA-directed RNA polymerase subunit alpha (312 aa).

Positions 1–229 (MLQYQIDRID…ELFQPLATVT (229 aa)) are alpha N-terminal domain (alpha-NTD). The interval 241–312 (SPEAQIPLEE…ISIPQSRTSV (72 aa)) is alpha C-terminal domain (alpha-CTD).

This sequence belongs to the RNA polymerase alpha chain family. In terms of assembly, in cyanobacteria the RNAP catalytic core is composed of 2 alpha, 1 beta, 1 beta', 1 gamma and 1 omega subunit. When a sigma factor is associated with the core the holoenzyme is formed, which can initiate transcription.

The enzyme catalyses RNA(n) + a ribonucleoside 5'-triphosphate = RNA(n+1) + diphosphate. Functionally, DNA-dependent RNA polymerase catalyzes the transcription of DNA into RNA using the four ribonucleoside triphosphates as substrates. This is DNA-directed RNA polymerase subunit alpha from Prochlorococcus marinus (strain MIT 9215).